The following is a 106-amino-acid chain: Small ribosomal subunit protein bS16 (106 aa).

This sequence belongs to the bacterial ribosomal protein bS16 family.

This Protochlamydia amoebophila (strain UWE25) protein is Small ribosomal subunit protein bS16.